The primary structure comprises 349 residues: Phosphoribosylformylglycinamidine cyclo-ligase (349 aa).

This sequence belongs to the AIR synthase family.

The protein resides in the cytoplasm. The enzyme catalyses 2-formamido-N(1)-(5-O-phospho-beta-D-ribosyl)acetamidine + ATP = 5-amino-1-(5-phospho-beta-D-ribosyl)imidazole + ADP + phosphate + H(+). The protein operates within purine metabolism; IMP biosynthesis via de novo pathway; 5-amino-1-(5-phospho-D-ribosyl)imidazole from N(2)-formyl-N(1)-(5-phospho-D-ribosyl)glycinamide: step 2/2. This is Phosphoribosylformylglycinamidine cyclo-ligase from Lactobacillus delbrueckii subsp. bulgaricus (strain ATCC 11842 / DSM 20081 / BCRC 10696 / JCM 1002 / NBRC 13953 / NCIMB 11778 / NCTC 12712 / WDCM 00102 / Lb 14).